The following is a 161-amino-acid chain: Lincosamide resistance protein (161 aa).

This Staphylococcus haemolyticus protein is Lincosamide resistance protein (linA).